The primary structure comprises 367 residues: Protein SGT1 homolog (367 aa).

TPR repeat units lie at residues alanine 6 to threonine 39, alanine 40 to methionine 73, and lysine 75 to aspartate 107. A CS domain is found at lysine 165–aspartate 254. Disordered stretches follow at residues alanine 261 to lysine 289 and valine 347 to tyrosine 367. The SGS domain occupies serine 277–tyrosine 367.

Belongs to the SGT1 family. Interacts (via CS domain) with RAR1 (via CHORD 2 domain). Interacts with RAD6. Expressed in roots, root tips, shoot apical meristem (SAM), young leaves, flag leaves and ears.

It localises to the cytoplasm. It is found in the nucleus. Its function is as follows. Involved in basal disease resistance to bacterial blight (X.oryzae). May act as positive regulator of basal defense. Probably required for SCF-mediated ubiquitination, by coupling HSP90 to SCF complex for ubiquitination of HSP90 client proteins. This chain is Protein SGT1 homolog, found in Oryza sativa subsp. japonica (Rice).